Consider the following 223-residue polypeptide: Translation initiation factor 6 (223 aa).

Belongs to the eIF-6 family.

Binds to the 50S ribosomal subunit and prevents its association with the 30S ribosomal subunit to form the 70S initiation complex. This is Translation initiation factor 6 from Saccharolobus islandicus (strain M.16.27) (Sulfolobus islandicus).